The primary structure comprises 124 residues: MDKLFNRSFRIAQELQKNIAFIIQHSLKDPRIKTIITVSEVRLSKDLSYAQVFVSFLETNSNLTVKKVLILLNRASGYIRKLLCKKMNLRIIPIIVFFHDDSFFKGNKISKLLNILTEKNNITL.

This sequence belongs to the RbfA family. As to quaternary structure, monomer. Binds 30S ribosomal subunits, but not 50S ribosomal subunits or 70S ribosomes.

The protein localises to the cytoplasm. Its function is as follows. One of several proteins that assist in the late maturation steps of the functional core of the 30S ribosomal subunit. Associates with free 30S ribosomal subunits (but not with 30S subunits that are part of 70S ribosomes or polysomes). Required for efficient processing of 16S rRNA. May interact with the 5'-terminal helix region of 16S rRNA. The sequence is that of Ribosome-binding factor A from Buchnera aphidicola subsp. Schizaphis graminum (strain Sg).